Reading from the N-terminus, the 267-residue chain is Ubiquinone biosynthesis protein COQ4 homolog, mitochondrial (267 aa).

Residues H170, D171, H174, and E186 each contribute to the Zn(2+) site.

This sequence belongs to the COQ4 family. Component of a multi-subunit COQ enzyme complex. Zn(2+) serves as cofactor.

Its subcellular location is the mitochondrion inner membrane. It carries out the reaction a 4-hydroxy-3-methoxy-5-(all-trans-polyprenyl)benzoate + H(+) = a 2-methoxy-6-(all-trans-polyprenyl)phenol + CO2. Its pathway is cofactor biosynthesis; ubiquinone biosynthesis. Its function is as follows. Lyase that catalyzes the C1-decarboxylation of 4-hydroxy-3-methoxy-5-(all-trans-polyprenyl)benzoic acid into 2-methoxy-6-(all-trans-polyprenyl)phenol during ubiquinone biosynthesis. This is Ubiquinone biosynthesis protein COQ4 homolog, mitochondrial from Drosophila pseudoobscura pseudoobscura (Fruit fly).